A 2295-amino-acid polypeptide reads, in one-letter code: Protein DOP1B (2295 aa).

Phosphoserine occurs at positions 556 and 597. Disordered regions lie at residues 574 to 599, 651 to 684, 1034 to 1059, and 1092 to 1136; these read AGDE…SSPE, GEEN…DPKP, CKEA…QFTT, and DLPD…LQDL. Over residues 1111 to 1131 the composition is skewed to polar residues; it reads ADTSSGHTDSENTSTFSSPSH. The residue at position 1167 (Ser-1167) is a Phosphoserine.

It belongs to the DOP1 family. As to quaternary structure, homooligomer. Heterotrimer with ATP9A and MON2; this interaction is retromer-independent. Interacts with SNX3. As to expression, expressed in liver, heart and brain.

It is found in the early endosome membrane. The protein localises to the golgi apparatus membrane. Its function is as follows. May play a role in regulating membrane trafficking of cargo proteins. Together with ATP9A and MON2, regulates SNX3 retromer-mediated endosomal sorting of WLS away from lysosomal degradation. This Mus musculus (Mouse) protein is Protein DOP1B (Dop1b).